The sequence spans 76 residues: Conotoxin ArMLCL-022 (76 aa).

The signal sequence occupies residues 1 to 19 (MLCLPVFIILLLLASTAAS). A propeptide spanning residues 20–52 (NPLETRIQSDLIRAALEDADMKTERGFLGVLMK) is cleaved from the precursor.

It belongs to the conotoxin T superfamily. As to expression, expressed by the venom duct.

It is found in the secreted. This chain is Conotoxin ArMLCL-022, found in Conus arenatus (Sand-dusted cone).